The following is a 334-amino-acid chain: D-aspartate oxidase 2 (334 aa).

FAD-binding residues include aspartate 38, lysine 39, serine 46, glycine 310, and threonine 315.

It belongs to the DAMOX/DASOX family. FAD is required as a cofactor. Expressed in the intestinal cells, pharyngeal muscles, and body wall muscles in adult hermaphrodites.

The protein resides in the cytoplasm. The enzyme catalyses D-aspartate + O2 + H2O = oxaloacetate + H2O2 + NH4(+). It carries out the reaction D-glutamate + O2 + H2O = H2O2 + 2-oxoglutarate + NH4(+). With respect to regulation, inhibited by thiolactomycin. Its function is as follows. Selectively catalyzes the oxidative deamination of acidic amino acids. May play a role in the egg-laying events and early development of the worm, in addition to quality control of the germ cells. This Caenorhabditis elegans protein is D-aspartate oxidase 2 (ddo-2).